Here is a 538-residue protein sequence, read N- to C-terminus: Probable ribonuclease 3 (538 aa).

RNase III domains lie at 24–149 (IKSY…LNFG) and 238–381 (ASQM…EGYL). The DRBM domain maps to 408-477 (LISQNIEVLH…NYKDLILQLY (70 aa)).

The protein belongs to the ribonuclease III family.

It carries out the reaction Endonucleolytic cleavage to 5'-phosphomonoester.. Its function is as follows. Digests double-stranded RNA. The sequence is that of Probable ribonuclease 3 from Acanthamoeba polyphaga (Amoeba).